The chain runs to 204 residues: GTP cyclohydrolase 1 (204 aa).

Zn(2+) contacts are provided by C93, H96, and C164.

This sequence belongs to the GTP cyclohydrolase I family. In terms of assembly, toroid-shaped homodecamer, composed of two pentamers of five dimers.

It carries out the reaction GTP + H2O = 7,8-dihydroneopterin 3'-triphosphate + formate + H(+). Its pathway is cofactor biosynthesis; 7,8-dihydroneopterin triphosphate biosynthesis; 7,8-dihydroneopterin triphosphate from GTP: step 1/1. The chain is GTP cyclohydrolase 1 from Rhizobium meliloti (strain 1021) (Ensifer meliloti).